The sequence spans 542 residues: Probable folate-biopterin transporter 8, chloroplastic (542 aa).

A chloroplast-targeting transit peptide spans 1-78 (MERIMINPLL…GVSEFEETAR (78 aa)). The interval 24–45 (LSSIHRQQQQQERQSNNNTLFM) is disordered. The next 12 membrane-spanning stretches (helical) occupy residues 103–123 (FPWL…PSTL), 132–152 (LPMV…IGSG), 155–175 (VPYI…MGIF), 181–201 (VLPS…ITEV), 223–243 (ALMA…YLLL), 246–266 (PPKI…VVSL), 308–328 (LIWA…VFCY), 338–358 (SVIG…TVVY), 369–389 (PLIH…YILV), 404–424 (VLCF…PFAV), 446–466 (LCLS…LIGI), and 477–497 (GILI…LVPM). The tract at residues 506 to 542 (GKRGISKRSRRNRRVGRVVDKESVTYRRERESEEAQR) is disordered. Basic residues predominate over residues 509–521 (GISKRSRRNRRVG). Residues 522–542 (RVVDKESVTYRRERESEEAQR) are compositionally biased toward basic and acidic residues.

Belongs to the major facilitator superfamily. Folate-biopterin transporter (TC 2.A.71) family.

The protein resides in the plastid. It is found in the chloroplast membrane. Functionally, could mediate folate transport. This is Probable folate-biopterin transporter 8, chloroplastic from Arabidopsis thaliana (Mouse-ear cress).